A 496-amino-acid chain; its full sequence is Probable cytosol aminopeptidase (496 aa).

The Mn(2+) site is built by K266 and D271. K278 is an active-site residue. The Mn(2+) site is built by D289, D348, and E350. Residue R352 is part of the active site.

This sequence belongs to the peptidase M17 family. Mn(2+) serves as cofactor.

It localises to the cytoplasm. It carries out the reaction Release of an N-terminal amino acid, Xaa-|-Yaa-, in which Xaa is preferably Leu, but may be other amino acids including Pro although not Arg or Lys, and Yaa may be Pro. Amino acid amides and methyl esters are also readily hydrolyzed, but rates on arylamides are exceedingly low.. It catalyses the reaction Release of an N-terminal amino acid, preferentially leucine, but not glutamic or aspartic acids.. Presumably involved in the processing and regular turnover of intracellular proteins. Catalyzes the removal of unsubstituted N-terminal amino acids from various peptides. The sequence is that of Probable cytosol aminopeptidase from Pseudomonas fluorescens (strain SBW25).